Consider the following 123-residue polypeptide: Small ribosomal subunit protein uS13 (123 aa).

A disordered region spans residues 95–123 (GLPVRGQKTKTNARTRKGPKKAVASKKKK).

This sequence belongs to the universal ribosomal protein uS13 family. In terms of assembly, part of the 30S ribosomal subunit. Forms a loose heterodimer with protein S19. Forms two bridges to the 50S subunit in the 70S ribosome.

Its function is as follows. Located at the top of the head of the 30S subunit, it contacts several helices of the 16S rRNA. In the 70S ribosome it contacts the 23S rRNA (bridge B1a) and protein L5 of the 50S subunit (bridge B1b), connecting the 2 subunits; these bridges are implicated in subunit movement. Contacts the tRNAs in the A and P-sites. The sequence is that of Small ribosomal subunit protein uS13 from Clostridium acetobutylicum (strain ATCC 824 / DSM 792 / JCM 1419 / IAM 19013 / LMG 5710 / NBRC 13948 / NRRL B-527 / VKM B-1787 / 2291 / W).